The chain runs to 520 residues: Protein EARLY FLOWERING 5 (520 aa).

3 consecutive short sequence motifs (nuclear localization signal) follow at residues 16–23 (YRKQIRKR), 52–59 (IRKLDMSK), and 71–78 (KKRQLEDT). A disordered region spans residues 83-410 (VKKRKEYDEK…PPSSFQDGQA (328 aa)). 2 stretches are compositionally biased toward basic and acidic residues: residues 87-97 (KEYDEKKKEQG) and 114-126 (LTGE…EDSV). Positions 148–168 (SSIGLAISSDGASSSSAALSS) are enriched in low complexity. Composition is skewed to pro residues over residues 198–207 (PLPPLPPLPP), 216–227 (SPFPPPPPGPPP), and 235–253 (PPLP…PPPG). 3 stretches are compositionally biased toward polar residues: residues 267–281 (SDFT…NITS), 300–312 (AESN…NANL), and 326–343 (QQHQ…TNFQ). Pro residues-rich tracts occupy residues 346–369 (VHPP…PPHP) and 378–403 (PRPP…PPPS).

In terms of tissue distribution, in seedlings, mostly expressed in the shoot apical meristem (SAM) and root tip.

Its subcellular location is the nucleus. Its function is as follows. Involved in the regulation of flowering time in both long and short days. This chain is Protein EARLY FLOWERING 5, found in Arabidopsis thaliana (Mouse-ear cress).